A 1074-amino-acid polypeptide reads, in one-letter code: Transmembrane protein 132E (1074 aa).

The first 23 residues, 1–23 (MAPGMSGRRGAALLCLSVLLAHA), serve as a signal peptide directing secretion. Over 26–894 (RSHPASPSPP…LTDLEIGMYA (869 aa)) the chain is Extracellular. N-linked (GlcNAc...) asparagine glycans are attached at residues N70 and N91. Disordered stretches follow at residues 205 to 224 (PAAP…PEAA) and 243 to 266 (GGCG…ESPT). A compositionally biased stretch (low complexity) spans 247 to 262 (SARRGPGPGPGAAARA). N-linked (GlcNAc...) asparagine glycans are attached at residues N320 and N401. Disordered stretches follow at residues 564-587 (RRSA…ANRG) and 816-867 (GRDE…PVPP). Over residues 843-854 (GAGPPGTAIPAG) the composition is skewed to low complexity. A helical membrane pass occupies residues 895 to 915 (LLGVFCLAILVFLINCIVFVL). Residues 916-1074 (RYRHKRIPPE…NYMRRIKDIA (159 aa)) are Cytoplasmic-facing. Positions 962–1064 (VPACCHGDHH…TRPTPPPDLH (103 aa)) are disordered. Composition is skewed to low complexity over residues 973 to 985 (SGSS…SQVH) and 1016 to 1026 (FTTFTTLPTEE). A compositionally biased stretch (acidic residues) spans 1035–1044 (GEEEDEEEDL).

Belongs to the TMEM132 family. In terms of tissue distribution, widely expressed, with highest levels in the cochlea. In the cochlea, detected in spiral ganglion, the organ of Corti and stria vascularis. In the organ of Corti, prominently expressed in the outer and inner hair cells, especially at the apical and basal region of the outer hair cell body (at protein level).

It is found in the membrane. In terms of biological role, required for normal inner ear hair cell function and hearing. The chain is Transmembrane protein 132E (Tmem132e) from Mus musculus (Mouse).